The following is a 223-amino-acid chain: MPGLDGFGIRARLEEALLYLCTDARTERGDLAEFADAALDGGVDIIQLRDKSAGGAPLEARHELAALEVLAEACVRHGALLAVNDRADVAMAADADVLHLGQDDLPVELARRIVGDQVVVGRSTHDVVQADSAATEQGVDYFCTGPVWTTPTKPGREAAGLELVRHTAEHRGHGRPWFAIGGIGMDNIDEVVQAGARRVVVVRAITEAEDPRAAAAALRTKLG.

Residues 47–51 and N84 contribute to the 4-amino-2-methyl-5-(diphosphooxymethyl)pyrimidine site; that span reads QLRDK. The Mg(2+) site is built by D85 and D104. Residue S123 participates in 4-amino-2-methyl-5-(diphosphooxymethyl)pyrimidine binding. 150–152 contacts 2-[(2R,5Z)-2-carboxy-4-methylthiazol-5(2H)-ylidene]ethyl phosphate; the sequence is TPT. K153 serves as a coordination point for 4-amino-2-methyl-5-(diphosphooxymethyl)pyrimidine. Residue G182 participates in 2-[(2R,5Z)-2-carboxy-4-methylthiazol-5(2H)-ylidene]ethyl phosphate binding.

The protein belongs to the thiamine-phosphate synthase family. The cofactor is Mg(2+).

The catalysed reaction is 2-[(2R,5Z)-2-carboxy-4-methylthiazol-5(2H)-ylidene]ethyl phosphate + 4-amino-2-methyl-5-(diphosphooxymethyl)pyrimidine + 2 H(+) = thiamine phosphate + CO2 + diphosphate. It catalyses the reaction 2-(2-carboxy-4-methylthiazol-5-yl)ethyl phosphate + 4-amino-2-methyl-5-(diphosphooxymethyl)pyrimidine + 2 H(+) = thiamine phosphate + CO2 + diphosphate. The enzyme catalyses 4-methyl-5-(2-phosphooxyethyl)-thiazole + 4-amino-2-methyl-5-(diphosphooxymethyl)pyrimidine + H(+) = thiamine phosphate + diphosphate. It participates in cofactor biosynthesis; thiamine diphosphate biosynthesis; thiamine phosphate from 4-amino-2-methyl-5-diphosphomethylpyrimidine and 4-methyl-5-(2-phosphoethyl)-thiazole: step 1/1. In terms of biological role, condenses 4-methyl-5-(beta-hydroxyethyl)thiazole monophosphate (THZ-P) and 2-methyl-4-amino-5-hydroxymethyl pyrimidine pyrophosphate (HMP-PP) to form thiamine monophosphate (TMP). This is Thiamine-phosphate synthase from Saccharopolyspora erythraea (strain ATCC 11635 / DSM 40517 / JCM 4748 / NBRC 13426 / NCIMB 8594 / NRRL 2338).